We begin with the raw amino-acid sequence, 551 residues long: Scaffold protein D13 ortholog (551 aa).

Belongs to the poxviridae protein D13 family. In terms of assembly, homotrimer. Self-assembles to form a layer. Interacts with A17 (via N-terminus); this interaction is necessary for D13 association with membranes.

The protein resides in the membrane. Scaffold protein which forms a transitory spherical honeycomb lattice providing curvature and rigidity to the convex membrane of crescent and immature virions (IV). This association occurs concomitantly with viral membrane formation. Targeted by the drug rifampicin, which prevents the formation of this lattice, and hence virus morphogenesis. In the presence of rifampicin, irregularly shaped membranes that lack the honeycomb layer accumulate around areas of electron-dense viroplasm. This layer is lost from virions during maturation from IV to mature virion (MV), through the proteolysis of A17 N-terminus. The chain is Scaffold protein D13 ortholog from Sus scrofa (Pig).